The primary structure comprises 652 residues: Leucine aminopeptidase 2 (652 aa).

A peptide-binding positions include 165–167 and 293–298; these read QLE and PYGGME. A Zn(2+)-binding site is contributed by H322. E323 serves as the catalytic Proton acceptor. Residues H326 and E345 each contribute to the Zn(2+) site. Y411 acts as the Proton donor in catalysis.

The protein belongs to the peptidase M1 family. Requires Zn(2+) as cofactor.

The protein localises to the cytoplasm. Its subcellular location is the nucleus. It carries out the reaction an epoxide + H2O = an ethanediol. In terms of biological role, aminopeptidase that preferentially cleaves di- and tripeptides. Also has low epoxide hydrolase activity (in vitro). Can hydrolyze the epoxide leukotriene LTA(4) but it forms preferentially 5,6-dihydroxy-7,9,11,14-eicosatetraenoic acid rather than the cytokine leukotriene B(4) as the product compared to the homologous mammalian enzyme (in vitro). The chain is Leucine aminopeptidase 2 from Candida glabrata (strain ATCC 2001 / BCRC 20586 / JCM 3761 / NBRC 0622 / NRRL Y-65 / CBS 138) (Yeast).